The chain runs to 393 residues: Probable acetyl-CoA acyltransferase (393 aa).

Catalysis depends on Cys88, which acts as the Acyl-thioester intermediate. Residues His349 and Cys378 each act as proton acceptor in the active site.

Belongs to the thiolase-like superfamily. Thiolase family.

The protein localises to the cytoplasm. It carries out the reaction 2 acetyl-CoA = acetoacetyl-CoA + CoA. This is Probable acetyl-CoA acyltransferase from Staphylococcus aureus (strain MRSA252).